The primary structure comprises 313 residues: Ribosomal protein L11 methyltransferase (313 aa).

S-adenosyl-L-methionine-binding residues include Thr164, Gly185, Asp207, and Asn249.

This sequence belongs to the methyltransferase superfamily. PrmA family.

The protein localises to the cytoplasm. The enzyme catalyses L-lysyl-[protein] + 3 S-adenosyl-L-methionine = N(6),N(6),N(6)-trimethyl-L-lysyl-[protein] + 3 S-adenosyl-L-homocysteine + 3 H(+). In terms of biological role, methylates ribosomal protein L11. The chain is Ribosomal protein L11 methyltransferase from Clostridium botulinum (strain Eklund 17B / Type B).